Consider the following 928-residue polypeptide: DNA ligase 4 (928 aa).

ATP-binding residues include E302, K304, R309, E362, F409, E469, K474, K492, and K494. Catalysis depends on K304, which acts as the N6-AMP-lysine intermediate. Mg(2+) is bound at residue E362. E469 lines the Mg(2+) pocket. BRCT domains follow at residues 673–769 (VESD…PYFI) and 821–927 (PWIY…DYKF).

This sequence belongs to the ATP-dependent DNA ligase family. Requires Mg(2+) as cofactor.

It localises to the nucleus. The catalysed reaction is ATP + (deoxyribonucleotide)n-3'-hydroxyl + 5'-phospho-(deoxyribonucleotide)m = (deoxyribonucleotide)n+m + AMP + diphosphate.. DNA ligase involved in DNA non-homologous end joining (NHEJ); required for double-strand break (DSB) repair. Not required for the repair of DSBs induced by ionizing radiation or UV light. Has an important role in morphogenesis, positively affecting the capacity to form hyphae. This Candida albicans (strain SC5314 / ATCC MYA-2876) (Yeast) protein is DNA ligase 4 (LIG4).